Reading from the N-terminus, the 180-residue chain is MSALTLFSVTDPQTPVWHSTDAKAIQAQLNAKGVRFERWQADRDLGANPSPETVIAAYQHAIDKLVAEKGYQSWDVISLRADNPQKEALREKFLNEHTHGEDEVRFFVEGAGLFCLHIGDEVFQVLCEKNDLISVPAHTPHWFDMGSEPNFTAIRIFDNPEGWIAQFTGDDIASAYPRLA.

His97, His99, Glu103, and His141 together coordinate Fe(2+). Ni(2+) contacts are provided by His97, His99, Glu103, and His141.

The protein belongs to the acireductone dioxygenase (ARD) family. In terms of assembly, monomer. It depends on Fe(2+) as a cofactor. Ni(2+) is required as a cofactor.

It carries out the reaction 1,2-dihydroxy-5-(methylsulfanyl)pent-1-en-3-one + O2 = 3-(methylsulfanyl)propanoate + CO + formate + 2 H(+). It catalyses the reaction 1,2-dihydroxy-5-(methylsulfanyl)pent-1-en-3-one + O2 = 4-methylsulfanyl-2-oxobutanoate + formate + 2 H(+). The protein operates within amino-acid biosynthesis; L-methionine biosynthesis via salvage pathway; L-methionine from S-methyl-5-thio-alpha-D-ribose 1-phosphate: step 5/6. Its function is as follows. Catalyzes 2 different reactions between oxygen and the acireductone 1,2-dihydroxy-3-keto-5-methylthiopentene (DHK-MTPene) depending upon the metal bound in the active site. Fe-containing acireductone dioxygenase (Fe-ARD) produces formate and 2-keto-4-methylthiobutyrate (KMTB), the alpha-ketoacid precursor of methionine in the methionine recycle pathway. Ni-containing acireductone dioxygenase (Ni-ARD) produces methylthiopropionate, carbon monoxide and formate, and does not lie on the methionine recycle pathway. This chain is Acireductone dioxygenase, found in Klebsiella pneumoniae subsp. pneumoniae (strain ATCC 700721 / MGH 78578).